The chain runs to 334 residues: Glycerol-3-phosphate dehydrogenase [NAD(P)+] (334 aa).

4 residues coordinate NADPH: Ser-14, Tyr-15, His-35, and Lys-109. The sn-glycerol 3-phosphate site is built by Lys-109, Gly-138, and Thr-140. Ala-142 is a binding site for NADPH. 5 residues coordinate sn-glycerol 3-phosphate: Lys-194, Asp-247, Ser-257, Arg-258, and Asn-259. Residue Lys-194 is the Proton acceptor of the active site. Arg-258 serves as a coordination point for NADPH. Residues Val-282 and Glu-284 each contribute to the NADPH site.

This sequence belongs to the NAD-dependent glycerol-3-phosphate dehydrogenase family.

It is found in the cytoplasm. It catalyses the reaction sn-glycerol 3-phosphate + NAD(+) = dihydroxyacetone phosphate + NADH + H(+). The enzyme catalyses sn-glycerol 3-phosphate + NADP(+) = dihydroxyacetone phosphate + NADPH + H(+). The protein operates within membrane lipid metabolism; glycerophospholipid metabolism. Catalyzes the reduction of the glycolytic intermediate dihydroxyacetone phosphate (DHAP) to sn-glycerol 3-phosphate (G3P), the key precursor for phospholipid synthesis. The protein is Glycerol-3-phosphate dehydrogenase [NAD(P)+] of Aeromonas salmonicida (strain A449).